The chain runs to 457 residues: Exodeoxyribonuclease 7 large subunit (457 aa).

This sequence belongs to the XseA family. In terms of assembly, heterooligomer composed of large and small subunits.

Its subcellular location is the cytoplasm. The catalysed reaction is Exonucleolytic cleavage in either 5'- to 3'- or 3'- to 5'-direction to yield nucleoside 5'-phosphates.. Functionally, bidirectionally degrades single-stranded DNA into large acid-insoluble oligonucleotides, which are then degraded further into small acid-soluble oligonucleotides. The protein is Exodeoxyribonuclease 7 large subunit of Photorhabdus laumondii subsp. laumondii (strain DSM 15139 / CIP 105565 / TT01) (Photorhabdus luminescens subsp. laumondii).